Reading from the N-terminus, the 1033-residue chain is Immunoglobulin superfamily member 2 (1033 aa).

The signal sequence occupies residues 1–20 (MACILCVASLFLSLTKFSIG). The Extracellular portion of the chain corresponds to 21–970 (QREVKIQEGP…VSSLICSSGP (950 aa)). 7 Ig-like C2-type domains span residues 22–141 (REVK…TNLT), 144–266 (PDTL…TLIT), 279–388 (PAAR…TQMG), 408–529 (PAAR…QKIS), 539–657 (LRVN…ARVS), 670–797 (PESK…RKTS), and 806–941 (PTGS…KWIN). Residues C43 and C121 are joined by a disulfide bond. The N-linked (GlcNAc...) asparagine glycan is linked to N139. A disulfide bond links C168 and C249. Positions 253 to 255 (EWI) match the EWI motif motif. 3 cysteine pairs are disulfide-bonded: C304/C377, C432/C509, and C560/C638. The N-linked (GlcNAc...) asparagine glycan is linked to N677. 2 disulfides stabilise this stretch: C695–C776 and C832–C925. A helical transmembrane segment spans residues 971-991 (LLHFLIVCPFVMLLLLATSFL). Residues 992-1033 (CLYRKARKLSQLSLSAKKEKALWVGMRKTSLQKEAGEESGHY) are Cytoplasmic-facing.

Post-translationally, N-glycosylated.

The protein resides in the membrane. In terms of biological role, plays a role as inhibitor of T-cells proliferation induced by CD3. Inhibits expression of IL2RA on activated T-cells and secretion of IL2. Inhibits tyrosine kinases that are required for IL2 production and cellular proliferation. Inhibits phospholipase C-gamma-1/PLCG1 phosphorylation and subsequent CD3-induced changes in intracellular free calcium. Prevents nuclear translocation of nuclear factor of activated T-cell to the nucleus. Plays a role in the inhibition of T-cell proliferation via IL10 secretion by cutaneous dendritic cells. The polypeptide is Immunoglobulin superfamily member 2 (Cd101) (Mus musculus (Mouse)).